The chain runs to 376 residues: 23S rRNA (uracil(747)-C(5))-methyltransferase RlmC (376 aa).

Residues cysteine 3, cysteine 11, cysteine 14, and cysteine 87 each coordinate [4Fe-4S] cluster. S-adenosyl-L-methionine contacts are provided by glutamine 212, phenylalanine 241, glutamate 262, and asparagine 307. Cysteine 334 acts as the Nucleophile in catalysis.

The protein belongs to the class I-like SAM-binding methyltransferase superfamily. RNA M5U methyltransferase family. RlmC subfamily.

It catalyses the reaction uridine(747) in 23S rRNA + S-adenosyl-L-methionine = 5-methyluridine(747) in 23S rRNA + S-adenosyl-L-homocysteine + H(+). Its function is as follows. Catalyzes the formation of 5-methyl-uridine at position 747 (m5U747) in 23S rRNA. The polypeptide is 23S rRNA (uracil(747)-C(5))-methyltransferase RlmC (Salmonella choleraesuis (strain SC-B67)).